The primary structure comprises 179 residues: ADP-ribosylation factor-like protein 5A (179 aa).

Gly-2 carries the N-myristoyl glycine lipid modification. GTP is bound by residues 23–30 (GLDNAGKT), 66–70 (DIGGQ), 125–128 (NKQD), and Ala-159.

It belongs to the small GTPase superfamily. Arf family. As to expression, low amounts were found in most tissues examined with highest levels in brain, intestine and thymus.

Functionally, lacks ADP-ribosylation enhancing activity. The polypeptide is ADP-ribosylation factor-like protein 5A (Arl5a) (Rattus norvegicus (Rat)).